The sequence spans 208 residues: Outer-membrane lipoprotein carrier protein (208 aa).

The signal sequence occupies residues 1–21 (MRLIRTLFVAALAMGTSLAHA).

This sequence belongs to the LolA family. Monomer.

The protein resides in the periplasm. Participates in the translocation of lipoproteins from the inner membrane to the outer membrane. Only forms a complex with a lipoprotein if the residue after the N-terminal Cys is not an aspartate (The Asp acts as a targeting signal to indicate that the lipoprotein should stay in the inner membrane). In Pseudomonas paraeruginosa (strain DSM 24068 / PA7) (Pseudomonas aeruginosa (strain PA7)), this protein is Outer-membrane lipoprotein carrier protein.